A 510-amino-acid polypeptide reads, in one-letter code: Cytochrome P450 11B2, mitochondrial (510 aa).

A mitochondrion-targeting transit peptide spans 1 to 34 (MGACDNDFIELHSRVTADVWLARPWQCLHRTRAL). Position 391 (F391) interacts with 21-hydroxyprogesterone. Residue C457 coordinates heme.

It belongs to the cytochrome P450 family. The cofactor is heme. In terms of tissue distribution, adrenal cortex.

Its subcellular location is the mitochondrion inner membrane. The enzyme catalyses a steroid + 2 reduced [adrenodoxin] + O2 + 2 H(+) = an 11beta-hydroxysteroid + 2 oxidized [adrenodoxin] + H2O. It catalyses the reaction 21-hydroxyprogesterone + 2 reduced [adrenodoxin] + O2 + 2 H(+) = corticosterone + 2 oxidized [adrenodoxin] + H2O. The catalysed reaction is corticosterone + 2 reduced [adrenodoxin] + O2 + 2 H(+) = 18-hydroxycorticosterone + 2 oxidized [adrenodoxin] + H2O. It carries out the reaction 18-hydroxycorticosterone + 2 reduced [adrenodoxin] + O2 + 2 H(+) = aldosterone + 2 oxidized [adrenodoxin] + 2 H2O. The enzyme catalyses 11-deoxycortisol + 2 reduced [adrenodoxin] + O2 + 2 H(+) = cortisol + 2 oxidized [adrenodoxin] + H2O. It catalyses the reaction cortisol + 2 reduced [adrenodoxin] + O2 + 2 H(+) = 18-hydroxycortisol + 2 oxidized [adrenodoxin] + H2O. The catalysed reaction is 21-hydroxyprogesterone + 2 reduced [adrenodoxin] + O2 + 2 H(+) = 18-hydroxy-11-deoxycorticosterone + 2 oxidized [adrenodoxin] + H2O. It carries out the reaction 18-hydroxycortisol + 2 reduced [adrenodoxin] + O2 + 2 H(+) = 18-oxocortisol + 2 oxidized [adrenodoxin] + 2 H2O. The protein operates within steroid biosynthesis. A cytochrome P450 monooxygenase that catalyzes the biosynthesis of aldosterone, the main mineralocorticoid responsible for salt and water homeostasis. Catalyzes three sequential oxidative reactions of 11-deoxycorticosterone (21-hydroxyprogesterone), namely 11-beta hydroxylation, followed by two successive oxidations at C18 yielding 18-hydroxy and then 18-oxo intermediates (that do not leave the enzyme active site during the consecutive hydroxylation reactions), and end with the formation of aldosterone. Can also produce 18-hydroxycortisol and 18-oxocortisol, derived from successive oxidations of cortisol at C18, normally found at very low levels, but significantly increased in primary aldosteronism, the most common form of secondary hypertension. Mechanistically, uses molecular oxygen inserting one oxygen atom into a substrate and reducing the second into a water molecule. Two electrons are provided by NADPH via a two-protein mitochondrial transfer system comprising flavoprotein FDXR (adrenodoxin/ferredoxin reductase) and nonheme iron-sulfur protein FDX1 or FDX2 (adrenodoxin/ferredoxin). Could also be involved in the androgen metabolic pathway. This chain is Cytochrome P450 11B2, mitochondrial (Cyp11b2), found in Rattus norvegicus (Rat).